The sequence spans 363 residues: Peptide chain release factor 1 (363 aa).

Q236 carries the post-translational modification N5-methylglutamine. Residues 286 to 305 are disordered; the sequence is KKEMERSTMRKSQIGSGDRS.

Belongs to the prokaryotic/mitochondrial release factor family. In terms of processing, methylated by PrmC. Methylation increases the termination efficiency of RF1.

The protein resides in the cytoplasm. Functionally, peptide chain release factor 1 directs the termination of translation in response to the peptide chain termination codons UAG and UAA. This chain is Peptide chain release factor 1, found in Wolbachia pipientis subsp. Culex pipiens (strain wPip).